The chain runs to 293 residues: MFTGSIVALITPMDDNGDVDRASLKSLIDYHVASGTAAIVSVGTTGESATLNHDEHVDVVMQTLELAGGRIPVIAGTGANSTSEAISLTQRFNDTGVVGCLTVTPYYNRPMQEGLYQHFKAIAESTDLPQILYNVPSRTGCDMLPPTIARLAKIKNIVAVKEATGNLSRVSQIQVLVDDEDFILLSGDDASGLDFMQLGGKGVISVTANIAAREMVELCALAAQGNFAEGRRLNQRLMPLHQHLFVEANPIPVKWAAKRLGLMANDTMRLPMTPLTDPAKRIVEDALKSAGLL.

T45 provides a ligand contact to pyruvate. The active-site Proton donor/acceptor is Y133. K161 acts as the Schiff-base intermediate with substrate in catalysis. I204 lines the pyruvate pocket.

It belongs to the DapA family. Homotetramer; dimer of dimers.

It localises to the cytoplasm. The enzyme catalyses L-aspartate 4-semialdehyde + pyruvate = (2S,4S)-4-hydroxy-2,3,4,5-tetrahydrodipicolinate + H2O + H(+). Its pathway is amino-acid biosynthesis; L-lysine biosynthesis via DAP pathway; (S)-tetrahydrodipicolinate from L-aspartate: step 3/4. Its function is as follows. Catalyzes the condensation of (S)-aspartate-beta-semialdehyde [(S)-ASA] and pyruvate to 4-hydroxy-tetrahydrodipicolinate (HTPA). The chain is 4-hydroxy-tetrahydrodipicolinate synthase from Yersinia pseudotuberculosis serotype I (strain IP32953).